Here is a 720-residue protein sequence, read N- to C-terminus: 1-deoxy-D-xylulose-5-phosphate synthase 1, chloroplastic (720 aa).

The transit peptide at 1-51 (MALTTFSISRGGFVGALPQEGHFAPAAAELSLHKLQSRPHKARRRSSSSIS) directs the protein to the chloroplast. Positions 35 to 46 (LQSRPHKARRRS) are enriched in basic residues. The segment at 35–74 (LQSRPHKARRRSSSSISASLSTEREAAEYHSQRPPTPLLD) is disordered. Basic and acidic residues predominate over residues 56 to 65 (TEREAAEYHS). Thiamine diphosphate contacts are provided by residues His-142 and 183–185 (GHS). Position 214 (Asp-214) interacts with Mg(2+). Thiamine diphosphate is bound by residues 215 to 216 (GA), Asn-243, Tyr-364, and Glu-446. Residue Asn-243 participates in Mg(2+) binding.

Belongs to the transketolase family. DXPS subfamily. Homodimer. Mg(2+) is required as a cofactor. Thiamine diphosphate serves as cofactor.

It is found in the plastid. The protein resides in the chloroplast stroma. The catalysed reaction is D-glyceraldehyde 3-phosphate + pyruvate + H(+) = 1-deoxy-D-xylulose 5-phosphate + CO2. It functions in the pathway metabolic intermediate biosynthesis; 1-deoxy-D-xylulose 5-phosphate biosynthesis; 1-deoxy-D-xylulose 5-phosphate from D-glyceraldehyde 3-phosphate and pyruvate: step 1/1. In terms of biological role, catalyzes the acyloin condensation reaction between C atoms 2 and 3 of pyruvate and glyceraldehyde 3-phosphate to yield 1-deoxy-D-xylulose-5-phosphate (DXP). Is a limiting enzyme for plastidic isoprenoid biosynthesis and essential for chloroplast development. This is 1-deoxy-D-xylulose-5-phosphate synthase 1, chloroplastic (CLA1) from Oryza sativa subsp. japonica (Rice).